Consider the following 428-residue polypeptide: Serine--tRNA ligase (428 aa).

Position 235–237 (235–237 (TAE)) interacts with L-serine. 266-268 (RSE) is a binding site for ATP. Residue Glu-289 participates in L-serine binding. Residue 353-356 (EISS) coordinates ATP. Position 389 (Ser-389) interacts with L-serine.

It belongs to the class-II aminoacyl-tRNA synthetase family. Type-1 seryl-tRNA synthetase subfamily. As to quaternary structure, homodimer. The tRNA molecule binds across the dimer.

It is found in the cytoplasm. The catalysed reaction is tRNA(Ser) + L-serine + ATP = L-seryl-tRNA(Ser) + AMP + diphosphate + H(+). The enzyme catalyses tRNA(Sec) + L-serine + ATP = L-seryl-tRNA(Sec) + AMP + diphosphate + H(+). Its pathway is aminoacyl-tRNA biosynthesis; selenocysteinyl-tRNA(Sec) biosynthesis; L-seryl-tRNA(Sec) from L-serine and tRNA(Sec): step 1/1. In terms of biological role, catalyzes the attachment of serine to tRNA(Ser). Is also able to aminoacylate tRNA(Sec) with serine, to form the misacylated tRNA L-seryl-tRNA(Sec), which will be further converted into selenocysteinyl-tRNA(Sec). The polypeptide is Serine--tRNA ligase (Shewanella frigidimarina (strain NCIMB 400)).